Here is a 76-residue protein sequence, read N- to C-terminus: Nemertide alpha-1 (76 aa).

Positions 1–28 (YRIASSSIAKMKTAVFLVGLLFLGLVFA) are cleaved as a signal peptide. The propeptide occupies 29–44 (DEAAIDSEFDQSIDKR). Intrachain disulfides connect C46-C60, C53-C64, and C59-C70. P72 and P73 each carry 4-hydroxyproline.

Belongs to the nemertide family. Confined to the epidermis and to the mucus layer.

It is found in the secreted. Functionally, highly potent toxin against insect sodium channel (Nav) and with less potent activity against mammalian sodium channels. Potently inhibits inactivation of insect sodium channels of B.germanica (BgNav1) (EC(50)=8.6 nM), D.melanogaster (Dm Nav1), and arachnid sodium channel V.destructor (VdNav1). Also delays the inactivation of most mammalian Nav channels tested (human Nav1.1/SCN1A; EC(50)=124.1 nM, rat Nav1.2/SCN2A; EC(50)=359.6 nM, rat Nav1.3/SCN3A; EC(50)=135.4 nM, rat Nav1.4/SCN4A; EC(50)=145.5 nM, human Nav1.5/SCN5A; EC(50)=138.3 nM, mouse Nav1.6/SCN8A; EC(50)=240.4 nM, human Nav1.9/SCN9A; EC(50)=76.5 nM). 1 uM is enough to completely inhibits the inactivation, resulting in sustained non-inactivating currents. In addition, the toxin significantly enhances the recovery from inactivation, and the open state is not required for the toxin to interact with the channel. In vivo, injection into green crabs (Carcinus maenas at 1 mug/kg) of small doses (1-5 ug/kg) results in slow and fast permanent paralysis, whereas injection of high doses (more than 10 ug/kg) causes death. Injection into juvenile Blaptica dubia cockroaches results in death or permanent paralysis at doses higher than 7.1 ug/kg. Injection into brine shrimp (Artemia salina) stops movement or causes death after 24 hours (EC(50)=0.3 uM). In the rare inherited cardiac arrhythmia Brugada syndrome 1 (BRGDA1), this toxin is able to restore the loss of function by reducing channel inactivation, without affecting activation, by binding to Nav1.5/SCN5A. This chain is Nemertide alpha-1, found in Lineus lacteus (Ribbon worm).